A 309-amino-acid chain; its full sequence is Thermolabile glutaminase (309 aa).

Substrate-binding residues include serine 64, asparagine 114, glutamate 160, asparagine 167, tyrosine 191, tyrosine 243, and valine 261.

It belongs to the glutaminase family. As to quaternary structure, homotetramer.

It catalyses the reaction L-glutamine + H2O = L-glutamate + NH4(+). In Rhizobium etli (strain ATCC 51251 / DSM 11541 / JCM 21823 / NBRC 15573 / CFN 42), this protein is Thermolabile glutaminase (glsA).